Here is a 191-residue protein sequence, read N- to C-terminus: MLLFPGTFTMQTDYAELVRRTIRSVPDWPTPGVTFRDITPVLQDPRTFRVLIDLFVYRYMRQRLDLVAGVDARGFIVGAVLAHELNLGFVPVRKKGKLPYRTVAEEYSLEYGNAAVEMHTDSVRTGQRVLLVDDLIATGGTMLAAIKLLQRLGANVVEAAAIIDLPYLGGSAQITATGTPLYTVCQYQEGD.

This sequence belongs to the purine/pyrimidine phosphoribosyltransferase family. In terms of assembly, homodimer.

Its subcellular location is the cytoplasm. The catalysed reaction is AMP + diphosphate = 5-phospho-alpha-D-ribose 1-diphosphate + adenine. The protein operates within purine metabolism; AMP biosynthesis via salvage pathway; AMP from adenine: step 1/1. Catalyzes a salvage reaction resulting in the formation of AMP, that is energically less costly than de novo synthesis. This Bordetella bronchiseptica (strain ATCC BAA-588 / NCTC 13252 / RB50) (Alcaligenes bronchisepticus) protein is Adenine phosphoribosyltransferase.